The primary structure comprises 292 residues: N-acetylneuraminate lyase (292 aa).

Residues serine 47 and threonine 48 each coordinate aceneuramate. Catalysis depends on tyrosine 136, which acts as the Proton donor. Lysine 164 functions as the Schiff-base intermediate with substrate in the catalytic mechanism. Threonine 166, glycine 188, aspartate 190, glutamate 191, and serine 207 together coordinate aceneuramate.

The protein belongs to the DapA family. NanA subfamily. Homotetramer.

It is found in the cytoplasm. The catalysed reaction is aceneuramate = aldehydo-N-acetyl-D-mannosamine + pyruvate. Its pathway is amino-sugar metabolism; N-acetylneuraminate degradation; D-fructose 6-phosphate from N-acetylneuraminate: step 1/5. Its function is as follows. Catalyzes the reversible aldol cleavage of N-acetylneuraminic acid (sialic acid; Neu5Ac) to form pyruvate and N-acetylmannosamine (ManNAc) via a Schiff base intermediate. This Actinobacillus pleuropneumoniae serotype 3 (strain JL03) protein is N-acetylneuraminate lyase.